A 402-amino-acid chain; its full sequence is Tryptophan synthase beta chain (402 aa).

K91 is subject to N6-(pyridoxal phosphate)lysine.

This sequence belongs to the TrpB family. Tetramer of two alpha and two beta chains. It depends on pyridoxal 5'-phosphate as a cofactor.

It catalyses the reaction (1S,2R)-1-C-(indol-3-yl)glycerol 3-phosphate + L-serine = D-glyceraldehyde 3-phosphate + L-tryptophan + H2O. It participates in amino-acid biosynthesis; L-tryptophan biosynthesis; L-tryptophan from chorismate: step 5/5. The beta subunit is responsible for the synthesis of L-tryptophan from indole and L-serine. In Streptococcus thermophilus (strain CNRZ 1066), this protein is Tryptophan synthase beta chain.